A 570-amino-acid chain; its full sequence is Potassium-transporting ATPase potassium-binding subunit (570 aa).

The next 11 helical transmembrane spans lie at 7–27, 65–85, 95–115, 135–155, 179–199, 254–274, 286–306, 383–403, 422–442, 489–509, and 528–548; these read AEIALTLSLAVAIGWPLGVFL, AYALALLAFNLIGFVFVYAVL, PQGFPGLSGHLAFNTAISFIT, LVLTVQNFVSAATGATVAAAL, LYLLLPLAFVVAVVLAALGLP, LTNLITAISINTLGWAAFFAF, ALVIAAFVLLFAGAVGVYATE, GVAIMVVMALLSVFVAGLMVG, ILAVVIIPLSMLGFSGIAAVL, LGIAMAMGRFMPIVAVLAIAG, and GGLFIGLLIGVILILGGLQFF.

The protein belongs to the KdpA family. In terms of assembly, the system is composed of three essential subunits: KdpA, KdpB and KdpC.

It is found in the cell inner membrane. Part of the high-affinity ATP-driven potassium transport (or Kdp) system, which catalyzes the hydrolysis of ATP coupled with the electrogenic transport of potassium into the cytoplasm. This subunit binds the periplasmic potassium ions and delivers the ions to the membrane domain of KdpB through an intramembrane tunnel. The chain is Potassium-transporting ATPase potassium-binding subunit from Caulobacter vibrioides (strain ATCC 19089 / CIP 103742 / CB 15) (Caulobacter crescentus).